The following is a 235-amino-acid chain: Small ribosomal subunit protein uS3 (235 aa).

In terms of domain architecture, KH type-2 spans 39–107; that stretch reads VRKFLNKELA…PAQINIAEVK (69 aa). The tract at residues 215–235 is disordered; it reads AQSEQQPADKPKKAPRGKGRK.

It belongs to the universal ribosomal protein uS3 family. Part of the 30S ribosomal subunit. Forms a tight complex with proteins S10 and S14.

Binds the lower part of the 30S subunit head. Binds mRNA in the 70S ribosome, positioning it for translation. In Haemophilus influenzae (strain ATCC 51907 / DSM 11121 / KW20 / Rd), this protein is Small ribosomal subunit protein uS3.